We begin with the raw amino-acid sequence, 400 residues long: Dual specificity mitogen-activated protein kinase kinase 2 (400 aa).

Met1 carries the post-translational modification N-acetylmethionine. Phosphoserine is present on Ser23. The 298-residue stretch at 72–369 (FERISELGAG…LKLLTNHAFI (298 aa)) folds into the Protein kinase domain. Residues 78-86 (LGAGNGGVV) and Lys101 contribute to the ATP site. Asp194 acts as the Proton acceptor in catalysis. Phosphoserine; by RAF is present on residues Ser222 and Ser226. Residues 282-310 (PVVDGADGEPHSVSPRPRPPGRPISGHGM) form a disordered region. Phosphoserine occurs at positions 293, 295, and 306. Phosphothreonine is present on residues Thr394 and Thr396.

It belongs to the protein kinase superfamily. STE Ser/Thr protein kinase family. MAP kinase kinase subfamily. In terms of assembly, interacts with MORG1. Interacts with SGK1. Interacts with KSR1. Interacts with KSR1 and BRAF; the interaction with KSR1 mediates KSR1-BRAF dimerization. Interacts with GLS. Requires Mg(2+) as cofactor. Post-translationally, MAPKK is itself dependent on Ser/Thr phosphorylation for activity catalyzed by MAP kinase kinase kinases (RAF or MEKK1). Phosphorylated by MAP2K1/MEK1. Expressed abundantly in the adult brain and muscle.

The protein localises to the cytoplasm. Its subcellular location is the membrane. It carries out the reaction L-seryl-[protein] + ATP = O-phospho-L-seryl-[protein] + ADP + H(+). The catalysed reaction is L-threonyl-[protein] + ATP = O-phospho-L-threonyl-[protein] + ADP + H(+). It catalyses the reaction L-tyrosyl-[protein] + ATP = O-phospho-L-tyrosyl-[protein] + ADP + H(+). Catalyzes the concomitant phosphorylation of a threonine and a tyrosine residue in a Thr-Glu-Tyr sequence located in MAP kinases. Activates the ERK1 and ERK2 MAP kinases. Activates BRAF in a KSR1 or KSR2-dependent manner; by binding to KSR1 or KSR2 releases the inhibitory intramolecular interaction between KSR1 or KSR2 protein kinase and N-terminal domains which promotes KSR1 or KSR2-BRAF dimerization and BRAF activation. This chain is Dual specificity mitogen-activated protein kinase kinase 2 (Map2k2), found in Rattus norvegicus (Rat).